Here is a 148-residue protein sequence, read N- to C-terminus: Large ribosomal subunit protein bL9 (148 aa).

It belongs to the bacterial ribosomal protein bL9 family.

In terms of biological role, binds to the 23S rRNA. The sequence is that of Large ribosomal subunit protein bL9 from Chloroflexus aurantiacus (strain ATCC 29366 / DSM 635 / J-10-fl).